The chain runs to 215 residues: Large ribosomal subunit protein uL3 (215 aa).

Residues 136–155 are disordered; it reads GVSISHRSHGSTGQRQDPGK. Glutamine 151 is modified (N5-methylglutamine).

The protein belongs to the universal ribosomal protein uL3 family. As to quaternary structure, part of the 50S ribosomal subunit. Forms a cluster with proteins L14 and L19. Methylated by PrmB.

Functionally, one of the primary rRNA binding proteins, it binds directly near the 3'-end of the 23S rRNA, where it nucleates assembly of the 50S subunit. In Rickettsia canadensis (strain McKiel), this protein is Large ribosomal subunit protein uL3.